Reading from the N-terminus, the 293-residue chain is Probable endonuclease 4 (293 aa).

Positions 78, 118, 154, 188, 191, 225, 238, 240, and 270 each coordinate Zn(2+).

The protein belongs to the AP endonuclease 2 family. Zn(2+) serves as cofactor.

The enzyme catalyses Endonucleolytic cleavage to 5'-phosphooligonucleotide end-products.. Functionally, endonuclease IV plays a role in DNA repair. It cleaves phosphodiester bonds at apurinic or apyrimidinic (AP) sites, generating a 3'-hydroxyl group and a 5'-terminal sugar phosphate. This is Probable endonuclease 4 from Vibrio vulnificus (strain CMCP6).